The following is an 831-amino-acid chain: Prolactin receptor (831 aa).

The first 23 residues, 1–23 (MKQNLISSVQIILLLPLTTVGLT), serve as a signal peptide directing secretion. Over 24–438 (SQSFPGKPKI…EIPNDFRVKD (415 aa)) the chain is Extracellular. Fibronectin type-III domains follow at residues 30-128 (KPKI…VQPG), 129-232 (SPVN…SPPE), 233-331 (KPTI…VQPD), and 332-433 (PPAN…IPND). Cysteines 36 and 46 form a disulfide. A glycan (N-linked (GlcNAc...) asparagine) is linked at Asn59. Residues Cys75 and Cys86 are joined by a disulfide bond. N-linked (GlcNAc...) asparagine glycans are attached at residues Asn91, Asn100, Asn112, Asn132, Asn262, Asn303, Asn315, and Asn335. Zn(2+) is bound by residues Asp414 and His416. The short motif at 419-423 (WSEWS) is the WSXWS motif element. Residues 439–459 (MIVWIVLGVLSSLICLIMSWT) form a helical membrane-spanning segment. Topologically, residues 460-831 (MVLKGYRMIT…DPSSFMPSFK (372 aa)) are cytoplasmic. The Box 1 motif signature appears at 471–479 (ILPPVPGPK). Disordered regions lie at residues 527–563 (HQLM…SPSL) and 776–831 (HTPT…PSFK). The span at 545–554 (TLKETDRDSG) shows a compositional bias: basic and acidic residues. The segment covering 777–803 (TPTSQEEPAKETSQNPQQGQVETNMSY) has biased composition (polar residues).

It belongs to the type I cytokine receptor family. Type 1 subfamily.

It is found in the membrane. Its function is as follows. This is a receptor for the anterior pituitary hormone prolactin. The sequence is that of Prolactin receptor (PRLR) from Meleagris gallopavo (Wild turkey).